The sequence spans 365 residues: tRNA 2-selenouridine synthase (365 aa).

A Rhodanese domain is found at 15 to 138 (LVSDHPIMDA…MRQFLIETID (124 aa)). C98 acts as the S-selanylcysteine intermediate in catalysis.

The protein belongs to the SelU family. Monomer.

It catalyses the reaction 5-methylaminomethyl-2-thiouridine(34) in tRNA + selenophosphate + (2E)-geranyl diphosphate + H2O + H(+) = 5-methylaminomethyl-2-selenouridine(34) in tRNA + (2E)-thiogeraniol + phosphate + diphosphate. The catalysed reaction is 5-methylaminomethyl-2-thiouridine(34) in tRNA + (2E)-geranyl diphosphate = 5-methylaminomethyl-S-(2E)-geranyl-thiouridine(34) in tRNA + diphosphate. It carries out the reaction 5-methylaminomethyl-S-(2E)-geranyl-thiouridine(34) in tRNA + selenophosphate + H(+) = 5-methylaminomethyl-2-(Se-phospho)selenouridine(34) in tRNA + (2E)-thiogeraniol. The enzyme catalyses 5-methylaminomethyl-2-(Se-phospho)selenouridine(34) in tRNA + H2O = 5-methylaminomethyl-2-selenouridine(34) in tRNA + phosphate. Its function is as follows. Involved in the post-transcriptional modification of the uridine at the wobble position (U34) of tRNA(Lys), tRNA(Glu) and tRNA(Gln). Catalyzes the conversion of 2-thiouridine (S2U-RNA) to 2-selenouridine (Se2U-RNA). Acts in a two-step process involving geranylation of 2-thiouridine (S2U) to S-geranyl-2-thiouridine (geS2U) and subsequent selenation of the latter derivative to 2-selenouridine (Se2U) in the tRNA chain. The sequence is that of tRNA 2-selenouridine synthase from Shewanella piezotolerans (strain WP3 / JCM 13877).